Here is an 801-residue protein sequence, read N- to C-terminus: Phosphatidylinositol 4-kinase beta (801 aa).

Disordered stretches follow at residues 1–29, 101–121, and 250–304; these read MGDTAVEPAPLKPASEPAPGPPGNNGGSL, EDEMGATVTSGTAKGARRRRQ, and RKRE…EDEP. An N-acetylglycine modification is found at G2. Positions 2 to 68 are interaction with ACBD3; that stretch reads GDTAVEPAPL…VRLLHGAVAV (67 aa). In terms of domain architecture, PIK helical spans 29–242; sequence LLSVITEGVG…GTKLRKLILS (214 aa). Phosphoserine is present on S258. Over residues 259–268 the composition is skewed to polar residues; that stretch reads PALNTGLSPS. Residue T263 is modified to Phosphothreonine. A phosphoserine mark is found at S266, S275, S277, S284, S294, and S413. The span at 278–294 shows a compositional bias: low complexity; it reads DATASISLSSSLKRTAS. Phosphothreonine is present on T423. At S496 the chain carries Phosphoserine. T502 and T504 each carry phosphothreonine. A PI3K/PI4K catalytic domain is found at 520–786; sequence EPWQEKVRRI…MVDGSMRSIT (267 aa). The tract at residues 526-532 is G-loop; that stretch reads VRRIREG. Residues 653-661 form a catalytic loop region; it reads QVKDRHNGN. The segment at 672-696 is activation loop; it reads HIDFGFILSSSPRNLGFETSAFKLT.

It belongs to the PI3/PI4-kinase family. Type III PI4K subfamily. As to quaternary structure, interacts with ARF1 and ARF3 in the Golgi complex, but not with ARF4, ARF5 or ARF6. Interacts with NCS1/FREQ in a calcium-independent manner. Interacts with CALN1/CABP8 and CALN2/CABP7; in a calcium-dependent manner; this interaction competes with NCS1/FREQ binding. Interacts with ACBD3. Interacts with ARMH3, YWHAB, YWHAE, YWHAG, YWHAH, YWHAQ, YWHAZ and SFN. Interacts with GGA2 (via VHS domain); the interaction is important for PI4KB location at the Golgi apparatus membrane. Interacts with ATG9A. The cofactor is Mg(2+). Mn(2+) serves as cofactor.

It is found in the endomembrane system. Its subcellular location is the mitochondrion outer membrane. The protein resides in the rough endoplasmic reticulum membrane. The protein localises to the golgi apparatus. It localises to the golgi apparatus membrane. The catalysed reaction is a 1,2-diacyl-sn-glycero-3-phospho-(1D-myo-inositol) + ATP = a 1,2-diacyl-sn-glycero-3-phospho-(1D-myo-inositol 4-phosphate) + ADP + H(+). With respect to regulation, inhibited by wortmannin. Increased kinase activity upon interaction with NCS1/FREQ. Functionally, phosphorylates phosphatidylinositol (PI) in the first committed step in the production of the second messenger inositol-1,4,5,-trisphosphate (PIP). May regulate Golgi disintegration/reorganization during mitosis, possibly via its phosphorylation. Involved in Golgi-to-plasma membrane trafficking. May play an important role in the inner ear development. The sequence is that of Phosphatidylinositol 4-kinase beta (PI4KB) from Sorex araneus (Eurasian common shrew).